A 238-amino-acid polypeptide reads, in one-letter code: uncharacterized protein (238 aa).

Helical transmembrane passes span 16–36 (HLII…IGLE), 44–64 (VGVK…IVSI), 81–101 (PMRL…GVIL), and 123–143 (IGIA…VMIL).

Belongs to the MgtC/SapB family.

It is found in the cell inner membrane. This is an uncharacterized protein from Haemophilus influenzae (strain ATCC 51907 / DSM 11121 / KW20 / Rd).